A 136-amino-acid chain; its full sequence is Galectin-7 (136 aa).

The Galectin domain maps to 6–136 (HKTPLPQGVR…DVQLHSVKIF (131 aa)). 70–76 (WGREERG) contacts a beta-D-galactoside.

In terms of assembly, monomer.

It localises to the cytoplasm. It is found in the nucleus. The protein resides in the secreted. In terms of biological role, could be involved in cell-cell and/or cell-matrix interactions necessary for normal growth control. Pro-apoptotic protein that functions intracellularly upstream of JNK activation and cytochrome c release. The polypeptide is Galectin-7 (Lgals7) (Rattus norvegicus (Rat)).